Reading from the N-terminus, the 506-residue chain is Beta-glucosidase 9 (506 aa).

An N-terminal signal peptide occupies residues 1–22; sequence MKHFSLLFIFLVILLATSYSDA. A beta-D-glucoside is bound by residues Gln-42, His-139, and 184 to 185; that span reads NE. Glu-185 functions as the Proton donor in the catalytic mechanism. A disulfide bridge links Cys-204 with Cys-212. N-linked (GlcNAc...) asparagine glycosylation is found at Asn-211 and Asn-216. Residue Tyr-328 participates in a beta-D-glucoside binding. Asn-363 is a glycosylation site (N-linked (GlcNAc...) asparagine). Glu-396 provides a ligand contact to a beta-D-glucoside. The Nucleophile role is filled by Glu-396. A glycan (N-linked (GlcNAc...) asparagine) is linked at Asn-429. The a beta-D-glucoside site is built by Trp-439 and Phe-455. N-linked (GlcNAc...) asparagine glycosylation is found at Asn-461, Asn-483, and Asn-499.

Belongs to the glycosyl hydrolase 1 family.

The enzyme catalyses Hydrolysis of terminal, non-reducing beta-D-glucosyl residues with release of beta-D-glucose.. This Arabidopsis thaliana (Mouse-ear cress) protein is Beta-glucosidase 9.